The primary structure comprises 207 residues: MQELYLLGVVPSRRFEAVVNSLSKTLDGPKTILEFWVVYRPKDVPPNLPRQPDSWLRLCSNIESHDETDTEWSKNTQWSMYLEGNSEPKREDKCGIRPVNRAKLTNGSVTEFVEKMGYEFSHEYIIQGLEYFFFDTTVRIYQTLIPSQQRSIKPPFHPMNEEQPWILHVYTHVADASNQVAMAKAEANLTKVKTLLSAFCDLKNVRL.

This sequence belongs to the Mediator complex subunit 18 family. In terms of assembly, component of the Mediator complex. Interacts with med17, prk1 and rbp1.

Its subcellular location is the nucleus. Functionally, component of the Mediator complex, a coactivator involved in the regulated transcription of nearly all RNA polymerase II-dependent genes. Mediator functions as a bridge to convey information from gene-specific regulatory proteins to the basal RNA polymerase II transcription machinery. Mediator is recruited to promoters by direct interactions with regulatory proteins and serves as a scaffold for the assembly of a functional preinitiation complex with RNA polymerase II and the general transcription factors. The protein is Mediator of RNA polymerase II transcription subunit 18 (med18) of Schizosaccharomyces pombe (strain 972 / ATCC 24843) (Fission yeast).